The sequence spans 858 residues: Protein 4.1 (858 aa).

A disordered region spans residues 1–125 (MTTEKSLAAE…KEIELGNSLD (125 aa)). Phosphoserine is present on Ser-14. Residues 31-50 (QQETQLEEASQAAAAEGSDQ) are compositionally biased toward low complexity. The residue at position 62 (Thr-62) is a Phosphothreonine. The span at 63–77 (PTHEDLTKNKERTSE) shows a compositional bias: basic and acidic residues. The segment covering 78–89 (SRGLSRLLSSFL) has biased composition (low complexity). Residues Ser-86, Ser-87, Ser-97, Ser-106, Ser-123, Ser-151, Ser-153, and Ser-154 each carry the phosphoserine modification. Positions 103–119 (EVESEKEKGEGGQKEIE) are enriched in basic and acidic residues. The tract at residues 155–208 (IETQPAQEEHREDPDSETKEGEGIEECSGTEVKEDPESRAEREPEASQKPVRRH) is disordered. 2 stretches are compositionally biased toward basic and acidic residues: residues 161–176 (QEEH…KEGE) and 185–200 (EVKE…EPEA). Ser-192 bears the Phosphoserine mark. The 282-residue stretch at 211–492 (MHCKVSLLDD…EHHTFFRLTS (282 aa)) folds into the FERM domain. Tyr-223 carries the post-translational modification Phosphotyrosine. Thr-379 bears the Phosphothreonine mark. The hydrophilic stretch occupies residues 495 to 608 (TIPKSKFLAL…PAEPEPTEAW (114 aa)). Residues 518 to 636 (TRQASALIDR…TQKLAGKGED (119 aa)) are disordered. Ser-522, Ser-541, Ser-543, and Ser-556 each carry phosphoserine. 2 stretches are compositionally biased toward basic and acidic residues: residues 581-595 (TPKE…RGEE) and 606-615 (EAWKVEKTHT). The interval 609–707 (KVEKTHTEVT…WDKRLSTHSP (99 aa)) is spectrin--actin-binding. A compositionally biased stretch (polar residues) spans 616–629 (EVTVPTSNGDQTQK). The residue at position 654 (Tyr-654) is a Phosphotyrosine. 5 positions are modified to phosphoserine: Ser-658, Ser-668, Ser-678, Ser-703, and Ser-706. The interval 710 to 858 (TLNINGQVPT…VHQETEISEE (149 aa)) is C-terminal (CTD). Thr-730 and Thr-853 each carry phosphothreonine.

Binds with a high affinity to glycophorin and with lower affinity to band III protein. Associates with the nuclear mitotic apparatus. Binds calmodulin, CPAP and DLG1. Also found to associate with contractile apparatus and tight junctions. Interacts with NUMA1; this interaction is negatively regulated by CDK1 during metaphase and promotes anaphase-specific localization of NUMA1 in symmetrically dividing cells. Interacts with ATP2B1; regulates small intestinal calcium absorption through regulation of membrane expression of ATP2B1. In terms of processing, O-glycosylated; contains N-acetylglucosamine side chains in the C-terminal domain. Post-translationally, phosphorylated at multiple sites by different protein kinases and each phosphorylation event selectively modulates the protein's functions. Phosphorylation on Tyr-654 reduces the ability of 4.1 to promote the assembly of the spectrin/actin/4.1 ternary complex.

Its subcellular location is the nucleus. The protein resides in the cytoplasm. It localises to the cytoskeleton. It is found in the cell cortex. Protein 4.1 is a major structural element of the erythrocyte membrane skeleton. It plays a key role in regulating membrane physical properties of mechanical stability and deformability by stabilizing spectrin-actin interaction. Recruits DLG1 to membranes. Required for dynein-dynactin complex and NUMA1 recruitment at the mitotic cell cortex during anaphase. This chain is Protein 4.1, found in Mus musculus (Mouse).